The sequence spans 130 residues: Small ribosomal subunit protein uS9 (130 aa).

It belongs to the universal ribosomal protein uS9 family.

The protein is Small ribosomal subunit protein uS9 of Bordetella parapertussis (strain 12822 / ATCC BAA-587 / NCTC 13253).